Reading from the N-terminus, the 475-residue chain is Ribulose bisphosphate carboxylase large chain (475 aa).

The propeptide occupies M1 to S2. P3 is subject to N-acetylproline. K14 is subject to N6,N6,N6-trimethyllysine. Residues N123 and T173 each coordinate substrate. The active-site Proton acceptor is the K175. Residue K177 participates in substrate binding. Mg(2+)-binding residues include K201, D203, and E204. The residue at position 201 (K201) is an N6-carboxylysine. H294 (proton acceptor) is an active-site residue. R295, H327, and S379 together coordinate substrate.

Belongs to the RuBisCO large chain family. Type I subfamily. In terms of assembly, heterohexadecamer of 8 large chains and 8 small chains; disulfide-linked. The disulfide link is formed within the large subunit homodimers. Requires Mg(2+) as cofactor. The disulfide bond which can form in the large chain dimeric partners within the hexadecamer appears to be associated with oxidative stress and protein turnover.

It is found in the plastid. The protein resides in the chloroplast. It catalyses the reaction 2 (2R)-3-phosphoglycerate + 2 H(+) = D-ribulose 1,5-bisphosphate + CO2 + H2O. It carries out the reaction D-ribulose 1,5-bisphosphate + O2 = 2-phosphoglycolate + (2R)-3-phosphoglycerate + 2 H(+). Functionally, ruBisCO catalyzes two reactions: the carboxylation of D-ribulose 1,5-bisphosphate, the primary event in carbon dioxide fixation, as well as the oxidative fragmentation of the pentose substrate in the photorespiration process. Both reactions occur simultaneously and in competition at the same active site. This is Ribulose bisphosphate carboxylase large chain from Angiopteris evecta (Mule's foot fern).